The following is a 141-amino-acid chain: MLTVEDILAILPHRPPFLLVDRILEIEDGLRAVGLKNVTMNEPFFVGHFPGRPVMPGVLIVEALAQVGAVIILRQPEYVGKIVMFAGIDDFRFKRPVTPGDTLKLEVSLDKMRRRIGKGQAKATVDGTVVAEGGLMFAIVD.

Residue H48 is part of the active site.

It belongs to the thioester dehydratase family. FabZ subfamily.

Its subcellular location is the cytoplasm. The catalysed reaction is a (3R)-hydroxyacyl-[ACP] = a (2E)-enoyl-[ACP] + H2O. Involved in unsaturated fatty acids biosynthesis. Catalyzes the dehydration of short chain beta-hydroxyacyl-ACPs and long chain saturated and unsaturated beta-hydroxyacyl-ACPs. The chain is 3-hydroxyacyl-[acyl-carrier-protein] dehydratase FabZ from Herpetosiphon aurantiacus (strain ATCC 23779 / DSM 785 / 114-95).